Consider the following 351-residue polypeptide: Homocitrate synthase (351 aa).

The Pyruvate carboxyltransferase domain maps to Ile-23–Ser-272.

It belongs to the alpha-IPM synthase/homocitrate synthase family.

The catalysed reaction is acetyl-CoA + 2-oxoglutarate + H2O = (2R)-homocitrate + CoA + H(+). In terms of biological role, this protein is a Fe-Mo-cofactor biosynthetic component. This Frankia alni protein is Homocitrate synthase (nifV).